A 469-amino-acid chain; its full sequence is 3-isopropylmalate dehydratase large subunit (469 aa).

The [4Fe-4S] cluster site is built by Cys350, Cys410, and Cys413.

It belongs to the aconitase/IPM isomerase family. LeuC type 1 subfamily. In terms of assembly, heterodimer of LeuC and LeuD. The cofactor is [4Fe-4S] cluster.

The catalysed reaction is (2R,3S)-3-isopropylmalate = (2S)-2-isopropylmalate. Its pathway is amino-acid biosynthesis; L-leucine biosynthesis; L-leucine from 3-methyl-2-oxobutanoate: step 2/4. In terms of biological role, catalyzes the isomerization between 2-isopropylmalate and 3-isopropylmalate, via the formation of 2-isopropylmaleate. The polypeptide is 3-isopropylmalate dehydratase large subunit (Allorhizobium ampelinum (strain ATCC BAA-846 / DSM 112012 / S4) (Agrobacterium vitis (strain S4))).